Consider the following 332-residue polypeptide: Glycine betaine-binding periplasmic protein OusX (332 aa).

The signal sequence occupies residues 1-21 (MRNISMATLALTTVLSTGLFA).

In terms of assembly, the complex is composed of two ATP-binding proteins (OusV), two transmembrane proteins (OusW) and a solute-binding protein (OusX).

Its subcellular location is the periplasm. Part of the OusB ABC transporter complex involved in glycine betaine and choline uptake. Binds glycine betaine. The sequence is that of Glycine betaine-binding periplasmic protein OusX from Dickeya dadantii (strain 3937) (Erwinia chrysanthemi (strain 3937)).